The primary structure comprises 282 residues: Heme oxygenase 1, chloroplastic (282 aa).

The transit peptide at methionine 1–proline 56 directs the protein to the chloroplast. Histidine 86 serves as a coordination point for heme b.

It belongs to the heme oxygenase family. Highly expressed in root nodules and, to a lower extent, in leaves, shoots, roots, flowers and pods (at protein level).

It is found in the plastid. The protein resides in the chloroplast. It catalyses the reaction heme b + 3 reduced [NADPH--hemoprotein reductase] + 3 O2 = biliverdin IXalpha + CO + Fe(2+) + 3 oxidized [NADPH--hemoprotein reductase] + 3 H2O + H(+). In terms of biological role, key enzyme in the synthesis of the chromophore of the phytochrome family of plant photoreceptors. Catalyzes the opening of the heme ring to form the open-chain tetrapyrrole biliverdin IX with the release of iron and carbon monoxide (CO). Produces specifically the biliverdin IX-alpha isomer. Can form complex with heme, is ferredoxin-dependent and its activity is increased in the presence of ascorbate. May affect the plastid-to-nucleus signaling pathway by perturbing tetrapyrrole synthesis. The plastid-to-nucleus signal plays an important role in the coordinated expression of both nuclear- and chloroplast-localized genes that encode photosynthesis-related proteins. Required for efficient symbiotic nitrogen fixation (SNF) in root nodules. Responsible for heme catabolism in uninfected nodule interstitial cells (UC), preventing superoxide production under stressful conditions (e.g. nitrate exposure and darkness) and catalyzing biliverdin (BV) production in senescing green nodules. In Lotus japonicus (Lotus corniculatus var. japonicus), this protein is Heme oxygenase 1, chloroplastic.